The primary structure comprises 1317 residues: DNA-directed RNA polymerase subunit beta' (1317 aa).

Zn(2+)-binding residues include C60, C62, C75, and C78. Mg(2+) contacts are provided by D535, D537, and D539. The Zn(2+) site is built by C890, C967, C974, and C977.

This sequence belongs to the RNA polymerase beta' chain family. In terms of assembly, the RNAP catalytic core consists of 2 alpha, 1 beta, 1 beta' and 1 omega subunit. When a sigma factor is associated with the core the holoenzyme is formed, which can initiate transcription. It depends on Mg(2+) as a cofactor. Zn(2+) is required as a cofactor.

It carries out the reaction RNA(n) + a ribonucleoside 5'-triphosphate = RNA(n+1) + diphosphate. Its function is as follows. DNA-dependent RNA polymerase catalyzes the transcription of DNA into RNA using the four ribonucleoside triphosphates as substrates. The chain is DNA-directed RNA polymerase subunit beta' from Mycolicibacterium smegmatis (strain ATCC 700084 / mc(2)155) (Mycobacterium smegmatis).